The sequence spans 142 residues: Hemoglobin subunit alpha-A (142 aa).

Positions 2-142 constitute a Globin domain; it reads VLSAADKTNV…VGTVLTAKYR (141 aa). His59 lines the O2 pocket. His88 provides a ligand contact to heme b.

This sequence belongs to the globin family. Heterotetramer of two alpha chains and two beta chains. In terms of tissue distribution, red blood cells.

Involved in oxygen transport from the lung to the various peripheral tissues. The chain is Hemoglobin subunit alpha-A (HBAA) from Coturnix japonica (Japanese quail).